The sequence spans 80 residues: U-actitoxin-Avd9a (80 aa).

An N-terminal signal peptide occupies residues 1-20; it reads MNLKVLAVFVLCAILVVVTA. The propeptide occupies 21–39; sequence ERRGTETGVYKKDTLQDLI. The 36-residue stretch at 45–80 folds into the ShKT domain; sequence CIDRFPTGTCKQVKKGGSCKNSDKYRMNCRKTCGLC. 3 cysteine pairs are disulfide-bonded: cysteine 45–cysteine 80, cysteine 54–cysteine 73, and cysteine 63–cysteine 77. Residues 68–69 form a crucial for binding to potassium channels region; the sequence is KY.

Belongs to the sea anemone type 1 potassium channel toxin family. Type 1b subfamily.

It localises to the secreted. Its subcellular location is the nematocyst. Its function is as follows. Inhibits voltage-gated potassium channels (Kv1/KCNA). The sequence is that of U-actitoxin-Avd9a from Anemonia viridis (Snakelocks anemone).